Here is a 55-residue protein sequence, read N- to C-terminus: Conotoxin Cal22c (55 aa).

The propeptide occupies 1–5 (GRPSA).

Post-translationally, contains 4 disulfide bonds. As to expression, expressed by the venom duct.

It is found in the secreted. Functionally, probable neurotoxin with unknown target. Possibly targets ion channels. The polypeptide is Conotoxin Cal22c (Californiconus californicus (California cone)).